Consider the following 778-residue polypeptide: Ubiquitin thioesterase trabid (778 aa).

2 consecutive RanBP2-type zinc fingers follow at residues 5-36 (KDDA…SKPL) and 89-118 (DSEK…KRGG). Residues 187-197 (ASHNQSQSQHR) are compositionally biased toward polar residues. The tract at residues 187 to 226 (ASHNQSQSQHRQPVLQQQMQLQLQPQQQRESSSSAAVPPQ) is disordered. A compositionally biased stretch (low complexity) spans 198–226 (QPVLQQQMQLQLQPQQQRESSSSAAVPPQ). The segment at 232–261 (YVSKWACNSCTYENWPRSIKCSMCGKTRER) adopts a RanBP2-type 3 zinc-finger fold. Residues 265–290 (GSQNDLHASSSLNSQEENQQQLQQPN) are disordered. A compositionally biased stretch (low complexity) spans 273–288 (SSSLNSQEENQQQLQQ). An OTU domain is found at 507–665 (MFVLWNRSAG…RGHFSALVPM (159 aa)). Cys518 (nucleophile) is an active-site residue. His658 serves as the catalytic Proton acceptor. Residues Ser770, Ser771, and Ser775 each carry the phosphoserine modification.

Belongs to the peptidase C64 family. As to quaternary structure, interacts with Apc.

It catalyses the reaction Thiol-dependent hydrolysis of ester, thioester, amide, peptide and isopeptide bonds formed by the C-terminal Gly of ubiquitin (a 76-residue protein attached to proteins as an intracellular targeting signal).. In terms of biological role, positive regulator of the Wnt signaling pathway. Specifically cleaves 'Lys-63'-linked ubiquitin chains. May act by deubiquitinating APC protein, a negative regulator of Wnt-mediated transcription. Required for an efficient wg response, but not for other signaling responses, in the eye. In Drosophila melanogaster (Fruit fly), this protein is Ubiquitin thioesterase trabid (trbd).